A 473-amino-acid polypeptide reads, in one-letter code: ATP synthase subunit beta 2 (473 aa).

ATP is bound at residue 158–165; it reads GGAGVGKT.

The protein belongs to the ATPase alpha/beta chains family. F-type ATPases have 2 components, CF(1) - the catalytic core - and CF(0) - the membrane proton channel. CF(1) has five subunits: alpha(3), beta(3), gamma(1), delta(1), epsilon(1). CF(0) has three main subunits: a(1), b(2) and c(9-12). The alpha and beta chains form an alternating ring which encloses part of the gamma chain. CF(1) is attached to CF(0) by a central stalk formed by the gamma and epsilon chains, while a peripheral stalk is formed by the delta and b chains.

The protein resides in the cell membrane. The enzyme catalyses ATP + H2O + 4 H(+)(in) = ADP + phosphate + 5 H(+)(out). Produces ATP from ADP in the presence of a proton gradient across the membrane. The catalytic sites are hosted primarily by the beta subunits. The protein is ATP synthase subunit beta 2 of Listeria welshimeri serovar 6b (strain ATCC 35897 / DSM 20650 / CCUG 15529 / CIP 8149 / NCTC 11857 / SLCC 5334 / V8).